The primary structure comprises 497 residues: Cytochrome P450 3A18 (497 aa).

C442 is a heme binding site.

It belongs to the cytochrome P450 family. The cofactor is heme.

Its subcellular location is the endoplasmic reticulum membrane. The protein localises to the microsome membrane. It catalyses the reaction an organic molecule + reduced [NADPH--hemoprotein reductase] + O2 = an alcohol + oxidized [NADPH--hemoprotein reductase] + H2O + H(+). Its function is as follows. Catalyzes 16-beta- and 6-alpha-hydroxylations of testosterone. This is Cytochrome P450 3A18 (Cyp3a18) from Rattus norvegicus (Rat).